The chain runs to 152 residues: Large ribosomal subunit protein bL9 (152 aa).

It belongs to the bacterial ribosomal protein bL9 family.

In terms of biological role, binds to the 23S rRNA. The chain is Large ribosomal subunit protein bL9 from Mycobacterium sp. (strain JLS).